The following is a 525-amino-acid chain: Mitochondrial-processing peptidase subunit alpha (525 aa).

The transit peptide at 1–33 (MAAMVLAATRLLRGSGSWGRSRPRFGDPAYRRF) directs the protein to the mitochondrion. At K64 the chain carries N6-succinyllysine. K299 carries the N6-acetyllysine modification.

It belongs to the peptidase M16 family. Heterodimer of PMPCA (alpha) and PMPCB (beta) subunits, forming the mitochondrial processing protease (MPP) in which PMPCA is involved in substrate recognition and binding and PMPCB is the catalytic subunit.

It is found in the mitochondrion matrix. It localises to the mitochondrion inner membrane. Its function is as follows. Substrate recognition and binding subunit of the essential mitochondrial processing protease (MPP), which cleaves the mitochondrial sequence off newly imported precursors proteins. The protein is Mitochondrial-processing peptidase subunit alpha (PMPCA) of Bos taurus (Bovine).